The following is a 393-amino-acid chain: Na(+)/H(+) antiporter NhaA 1 (393 aa).

The next 11 helical transmembrane spans lie at 23–43 (AGGVSLMVAAALALIVANSPF), 58–78 (LSLTDWINDALMAVFFLLVGL), 96–116 (MLPGIAAAGGVILPAIIFTAF), 126–146 (GWAVPSATDIAFALGVLSLLG), 155–175 (VFLATLAILDDLAAVVIIAIF), 178–198 (AEISMPYLGGAFAAAIVLFVM), 224–244 (GVHATVAGVVTALMIPLKAAP), 265–285 (VAFIIVPIFGFANAGISFAGL), 298–318 (IMLGLFIGKQLGVFGAAWLAI), 334–354 (LYGVAVLCGIGFTMSIFIGLL), and 367–387 (IGVLAGSGLSAICGYILLRLV).

This sequence belongs to the NhaA Na(+)/H(+) (TC 2.A.33) antiporter family.

The protein resides in the cell inner membrane. It catalyses the reaction Na(+)(in) + 2 H(+)(out) = Na(+)(out) + 2 H(+)(in). Its function is as follows. Na(+)/H(+) antiporter that extrudes sodium in exchange for external protons. The protein is Na(+)/H(+) antiporter NhaA 1 of Brucella anthropi (strain ATCC 49188 / DSM 6882 / CCUG 24695 / JCM 21032 / LMG 3331 / NBRC 15819 / NCTC 12168 / Alc 37) (Ochrobactrum anthropi).